Here is a 147-residue protein sequence, read N- to C-terminus: Hemoglobin subunit beta-1 (147 aa).

Serine 2 carries the N-acetylserine modification. Residues 3-147 enclose the Globin domain; it reads FLSAEEKGLV…VASALAHRYH (145 aa). Lysine 18 is subject to N6-succinyllysine. Phosphoserine occurs at positions 45 and 51. At lysine 60 the chain carries N6-succinyllysine. Residues histidine 64 and histidine 93 each coordinate heme b. At arginine 105 the chain carries Asymmetric dimethylarginine.

It belongs to the globin family. As to quaternary structure, heterotetramer of two alpha chains and two beta chains. As to expression, red blood cells.

Involved in oxygen transport from the lung to the various peripheral tissues. This is Hemoglobin subunit beta-1 (HBB1) from Panthera onca (Jaguar).